Reading from the N-terminus, the 107-residue chain is Ig kappa chain V-VI region J539 (107 aa).

Residues 1–23 (EIVLTQSPAITAASLGQKVTITC) are framework-1. The cysteines at positions 23 and 87 are disulfide-linked. The interval 24–33 (SASSSVSSLH) is complementarity-determining-1. The framework-2 stretch occupies residues 34 to 48 (WYQQKSGTSPKPWIY). The complementarity-determining-2 stretch occupies residues 49–55 (EISKLAS). The segment at 56-87 (GVPARFSGSGSGTSYSLTINTMEAEDAAIYYC) is framework-3. The segment at 88–96 (QQWTYPLIT) is complementarity-determining-3. A framework-4 region spans residues 97-106 (FGAGTKLELK).

This Mus musculus (Mouse) protein is Ig kappa chain V-VI region J539.